A 158-amino-acid polypeptide reads, in one-letter code: Phosphopantetheine adenylyltransferase (158 aa).

Residue serine 10 coordinates substrate. ATP contacts are provided by residues 10 to 11 (SF) and histidine 18. Substrate is bound by residues lysine 42, leucine 74, and arginine 88. Residues 89-91 (GLR), glutamate 99, and 124-130 (YANISSS) contribute to the ATP site.

This sequence belongs to the bacterial CoaD family. As to quaternary structure, homohexamer. Requires Mg(2+) as cofactor.

It is found in the cytoplasm. The enzyme catalyses (R)-4'-phosphopantetheine + ATP + H(+) = 3'-dephospho-CoA + diphosphate. Its pathway is cofactor biosynthesis; coenzyme A biosynthesis; CoA from (R)-pantothenate: step 4/5. In terms of biological role, reversibly transfers an adenylyl group from ATP to 4'-phosphopantetheine, yielding dephospho-CoA (dPCoA) and pyrophosphate. The sequence is that of Phosphopantetheine adenylyltransferase from Vesicomyosocius okutanii subsp. Calyptogena okutanii (strain HA).